The primary structure comprises 124 residues: Small ribosomal subunit protein uS12 (124 aa).

D89 is subject to 3-methylthioaspartic acid.

This sequence belongs to the universal ribosomal protein uS12 family. Part of the 30S ribosomal subunit. Contacts proteins S8 and S17. May interact with IF1 in the 30S initiation complex.

In terms of biological role, with S4 and S5 plays an important role in translational accuracy. Its function is as follows. Interacts with and stabilizes bases of the 16S rRNA that are involved in tRNA selection in the A site and with the mRNA backbone. Located at the interface of the 30S and 50S subunits, it traverses the body of the 30S subunit contacting proteins on the other side and probably holding the rRNA structure together. The combined cluster of proteins S8, S12 and S17 appears to hold together the shoulder and platform of the 30S subunit. This chain is Small ribosomal subunit protein uS12, found in Shewanella sediminis (strain HAW-EB3).